Here is a 585-residue protein sequence, read N- to C-terminus: ADP-ribosylation factor-binding protein GGA2 (585 aa).

One can recognise a VHS domain in the interval Ala33–Pro169. Residues Lys180 and Lys287 each participate in a glycyl lysine isopeptide (Lys-Gly) (interchain with G-Cter in ubiquitin) cross-link. The 126-residue stretch at Glu196–Asn321 folds into the GAT domain. The segment at Leu358–Ala378 is disordered. Positions Gly365 to Thr374 are enriched in low complexity. A GAE domain is found at Thr466–Thr581.

In terms of assembly, binds to ARF1 and ARF2.

The protein resides in the golgi apparatus. Its subcellular location is the trans-Golgi network. Its function is as follows. May play a role in the regulation of membrane traffic through the trans-Golgi network. The sequence is that of ADP-ribosylation factor-binding protein GGA2 (GGA2) from Saccharomyces cerevisiae (strain ATCC 204508 / S288c) (Baker's yeast).